The sequence spans 349 residues: DNA polymerase IV (349 aa).

Residues 7 to 188 (IIHIDMDYFF…LPVKKLFGVG (182 aa)) form the UmuC domain. 2 residues coordinate Mg(2+): D11 and D106. E107 is a catalytic residue.

This sequence belongs to the DNA polymerase type-Y family. In terms of assembly, monomer. Mg(2+) is required as a cofactor.

Its subcellular location is the cytoplasm. It carries out the reaction DNA(n) + a 2'-deoxyribonucleoside 5'-triphosphate = DNA(n+1) + diphosphate. Its function is as follows. Poorly processive, error-prone DNA polymerase involved in untargeted mutagenesis. Copies undamaged DNA at stalled replication forks, which arise in vivo from mismatched or misaligned primer ends. These misaligned primers can be extended by PolIV. Exhibits no 3'-5' exonuclease (proofreading) activity. May be involved in translesional synthesis, in conjunction with the beta clamp from PolIII. The protein is DNA polymerase IV of Francisella tularensis subsp. novicida (strain U112).